The primary structure comprises 554 residues: MKSTSKLQEMKLKNITEIAESVGLSEDDIELYGKYKAKISLDVLKQKPRQREGKVILVTSINPTPYGEGKTTTAIGLSMAINRLGFKSIVTLREPSLGPYLGIKGGATGGGVAQVLPSTDINLHFTGDIHAVTSANNLLCAAIDNHIYHGNELNINPKAVMVKRAMDMNDRALRNIVIGLGDGQRGAVREDGFIISVASEVMAILCLSNDLEDLKERLGNILVGFSYDKKPIYAKDLKVHGAMALLLKDAIKPNLVQTSEATAAIIHGGPFANIAHGTNSIIAIKIAQKLSDYVVVEAGFGADLGAEKFVNIVSRKSGIYPSAAVMVVTTKALKYHGSMGAKENLTSENIDTLKKGFKNLEKHIENLKLLGLEAIVTLNRFPHDTPAEISEIESFCKERGVEFAVSEAYELGSEGALDLAQKVIEVASRKRKINFVYEDSDPVEEKIRKVAKTIYGAADVQFSKSALLGLELIKKLNIDHFPICMAKTQYSLSDDPKLLGRPKDFVLNVNEIRINNGAQFIVVICGDIMTMPGLSKDYAALHLDIDEDGNVVWV.

64–71 lines the ATP pocket; it reads TPYGEGKT.

This sequence belongs to the formate--tetrahydrofolate ligase family.

It carries out the reaction (6S)-5,6,7,8-tetrahydrofolate + formate + ATP = (6R)-10-formyltetrahydrofolate + ADP + phosphate. Its pathway is one-carbon metabolism; tetrahydrofolate interconversion. The polypeptide is Formate--tetrahydrofolate ligase (Caldicellulosiruptor saccharolyticus (strain ATCC 43494 / DSM 8903 / Tp8T 6331)).